The chain runs to 296 residues: Transcription factor MYB72 (296 aa).

HTH myb-type domains follow at residues 11 to 63 (KNKV…INYL) and 64 to 118 (RPDV…KKRL). DNA-binding regions (H-T-H motif) lie at residues 39-63 (WRSL…INYL) and 91-114 (WSKI…NTHL). A disordered region spans residues 118 to 144 (LTPSSSSSSLSSTHDQSTKADHDKNCD). Positions 133-144 (QSTKADHDKNCD) are enriched in basic and acidic residues.

In terms of assembly, interacts with EIL3.

Its subcellular location is the nucleus. Functionally, involved in metal ions homeostasis, including iron ions (Fe) acquisition, via the regulation of NAS4 and NAS2 genes expression. Necessary for plant survival in alkaline soil where iron availability is greatly restricted. Involved in the up-regulation of several biosynthesis genes of secondary metabolites involved in iron uptake under conditions of iron deficiency. Triggers tolerance to nickel (Ni) and zinc (Zn) ions. Required in the roots during early signaling steps of rhizobacteria-mediated (e.g. P.fluorescens WCS417r) and beneficial fungi-mediated (e.g. T.asperellum T34) broad-spectrum induced systemic resistance (ISR) against several pathogens (e.g. P.syringae pv tomato, H.parasitica, P.cucumerina, A.brassicicola and B.cinerea) and implying enhanced callose deposition. Required for the induction of some genes (e.g. BGLU42) upon rhizobacteria-mediated ISR. The polypeptide is Transcription factor MYB72 (Arabidopsis thaliana (Mouse-ear cress)).